We begin with the raw amino-acid sequence, 146 residues long: Putative pre-16S rRNA nuclease (146 aa).

Belongs to the YqgF nuclease family.

The protein localises to the cytoplasm. In terms of biological role, could be a nuclease involved in processing of the 5'-end of pre-16S rRNA. In Burkholderia thailandensis (strain ATCC 700388 / DSM 13276 / CCUG 48851 / CIP 106301 / E264), this protein is Putative pre-16S rRNA nuclease.